We begin with the raw amino-acid sequence, 218 residues long: Ribulose-phosphate 3-epimerase (218 aa).

Serine 10 is a binding site for substrate. Positions 35, 37, and 68 each coordinate a divalent metal cation. The active-site Proton acceptor is aspartate 37. Residues histidine 68, 144 to 147 (GFSG), 177 to 179 (DGG), and 199 to 200 (GS) each bind substrate. Aspartate 177 is a binding site for a divalent metal cation. Residue aspartate 177 is the Proton donor of the active site.

Belongs to the ribulose-phosphate 3-epimerase family. A divalent metal cation is required as a cofactor.

It carries out the reaction D-ribulose 5-phosphate = D-xylulose 5-phosphate. The protein operates within carbohydrate degradation. Functionally, catalyzes the reversible epimerization of D-ribulose 5-phosphate to D-xylulose 5-phosphate. The polypeptide is Ribulose-phosphate 3-epimerase (Treponema pallidum (strain Nichols)).